The primary structure comprises 541 residues: Chaperonin GroEL (541 aa).

ATP contacts are provided by residues T29 to P32, D86 to T90, G413, N476 to A478, and D492.

This sequence belongs to the chaperonin (HSP60) family. In terms of assembly, forms a cylinder of 14 subunits composed of two heptameric rings stacked back-to-back. Interacts with the co-chaperonin GroES.

The protein localises to the cytoplasm. The catalysed reaction is ATP + H2O + a folded polypeptide = ADP + phosphate + an unfolded polypeptide.. Functionally, together with its co-chaperonin GroES, plays an essential role in assisting protein folding. The GroEL-GroES system forms a nano-cage that allows encapsulation of the non-native substrate proteins and provides a physical environment optimized to promote and accelerate protein folding. The chain is Chaperonin GroEL from Streptococcus equi subsp. zooepidemicus (strain H70).